The chain runs to 354 residues: Polyribonucleotide 5'-hydroxyl-kinase PYRAB01840 (354 aa).

36-43 (GDVDTGKT) is an ATP binding site.

The cofactor is a divalent metal cation.

It carries out the reaction a 5'-end dephospho-2'-deoxyribonucleoside-DNA + ATP = a 5'-end 5'-phospho-2'-deoxyribonucleoside-DNA + ADP + H(+). The catalysed reaction is a 5'-end dephospho-ribonucleoside-RNA + ATP = a 5'-end 5'-phospho-ribonucleoside-RNA + ADP + H(+). Its function is as follows. Polynucleotide kinase that can phosphorylate the 5'-hydroxyl groups of both single-stranded RNA (ssRNA) and single-stranded DNA (ssDNA). Exhibits a strong preference for ssRNA. This is Polyribonucleotide 5'-hydroxyl-kinase PYRAB01840 from Pyrococcus abyssi (strain GE5 / Orsay).